The chain runs to 176 residues: Ribosome rescue factor SmrB (176 aa).

Residues 93 to 168 (LDLHGYRQSE…GDAALLVLID (76 aa)) form the Smr domain.

Belongs to the SmrB family. Associates with collided ribosomes, but not with correctly translating polysomes.

Its function is as follows. Acts as a ribosome collision sensor. Detects stalled/collided disomes (pairs of ribosomes where the leading ribosome is stalled and a second ribosome has collided with it) and endonucleolytically cleaves mRNA at the 5' boundary of the stalled ribosome. Stalled/collided disomes form a new interface (primarily via the 30S subunits) that binds SmrB. Cleaved mRNA becomes available for tmRNA ligation, leading to ribosomal subunit dissociation and rescue of stalled ribosomes. This Shewanella oneidensis (strain ATCC 700550 / JCM 31522 / CIP 106686 / LMG 19005 / NCIMB 14063 / MR-1) protein is Ribosome rescue factor SmrB.